The primary structure comprises 455 residues: Mycosin-4 (455 aa).

The signal sequence occupies residues 1-25 (MTTSRTLRLLVVSALATLSGLGTPV). The region spanning 74–384 (SAQLADLDQV…NGTVDALAAV (311 aa)) is the Peptidase S8 domain. Active-site charge relay system residues include aspartate 98, histidine 129, and serine 329. The disordered stretch occupies residues 389-417 (IPQAGTATSDPAPVAVPVPRRSTPGPSDR). The segment covering 394 to 412 (TATSDPAPVAVPVPRRSTP) has biased composition (low complexity). Residues 432-452 (LALMATLATASRRLRPGRNGI) form a helical membrane-spanning segment.

Belongs to the peptidase S8 family.

It is found in the cell membrane. The polypeptide is Mycosin-4 (Mycobacterium tuberculosis (strain ATCC 25618 / H37Rv)).